The sequence spans 93 residues: Small ribosomal subunit protein uS19 (93 aa).

It belongs to the universal ribosomal protein uS19 family.

Its function is as follows. Protein S19 forms a complex with S13 that binds strongly to the 16S ribosomal RNA. This is Small ribosomal subunit protein uS19 from Campylobacter lari (strain RM2100 / D67 / ATCC BAA-1060).